Here is a 502-residue protein sequence, read N- to C-terminus: Probable glycine dehydrogenase (decarboxylating) subunit 2 (502 aa).

N6-(pyridoxal phosphate)lysine is present on Lys-273.

The protein belongs to the GcvP family. C-terminal subunit subfamily. The glycine cleavage system is composed of four proteins: P, T, L and H. In this organism, the P 'protein' is a heterodimer of two subunits. Pyridoxal 5'-phosphate serves as cofactor.

It carries out the reaction N(6)-[(R)-lipoyl]-L-lysyl-[glycine-cleavage complex H protein] + glycine + H(+) = N(6)-[(R)-S(8)-aminomethyldihydrolipoyl]-L-lysyl-[glycine-cleavage complex H protein] + CO2. In terms of biological role, the glycine cleavage system catalyzes the degradation of glycine. The P protein binds the alpha-amino group of glycine through its pyridoxal phosphate cofactor; CO(2) is released and the remaining methylamine moiety is then transferred to the lipoamide cofactor of the H protein. This is Probable glycine dehydrogenase (decarboxylating) subunit 2 from Pyrococcus furiosus (strain ATCC 43587 / DSM 3638 / JCM 8422 / Vc1).